A 295-amino-acid chain; its full sequence is Protease HtpX homolog (295 aa).

2 helical membrane-spanning segments follow: residues 6–26 (IGLF…VTSV) and 40–60 (LSSL…VSLL). Residue histidine 148 participates in Zn(2+) binding. The active site involves glutamate 149. Residue histidine 152 coordinates Zn(2+). The next 2 helical transmembrane spans lie at 163-183 (LIQG…SYAL) and 198-218 (ISNI…VAYF). Position 223 (glutamate 223) interacts with Zn(2+).

It belongs to the peptidase M48B family. It depends on Zn(2+) as a cofactor.

It is found in the cell inner membrane. This is Protease HtpX homolog from Leptospira borgpetersenii serovar Hardjo-bovis (strain JB197).